The sequence spans 641 residues: 1-deoxy-D-xylulose-5-phosphate synthase (641 aa).

Residues His78 and 119–121 (AHS) contribute to the thiamine diphosphate site. Position 150 (Asp150) interacts with Mg(2+). Thiamine diphosphate contacts are provided by residues 151-152 (GA), Asn179, Tyr288, and Glu370. A Mg(2+)-binding site is contributed by Asn179.

It belongs to the transketolase family. DXPS subfamily. Homodimer. It depends on Mg(2+) as a cofactor. The cofactor is thiamine diphosphate.

The enzyme catalyses D-glyceraldehyde 3-phosphate + pyruvate + H(+) = 1-deoxy-D-xylulose 5-phosphate + CO2. Its pathway is metabolic intermediate biosynthesis; 1-deoxy-D-xylulose 5-phosphate biosynthesis; 1-deoxy-D-xylulose 5-phosphate from D-glyceraldehyde 3-phosphate and pyruvate: step 1/1. In terms of biological role, catalyzes the acyloin condensation reaction between C atoms 2 and 3 of pyruvate and glyceraldehyde 3-phosphate to yield 1-deoxy-D-xylulose-5-phosphate (DXP). This is 1-deoxy-D-xylulose-5-phosphate synthase from Azorhizobium caulinodans (strain ATCC 43989 / DSM 5975 / JCM 20966 / LMG 6465 / NBRC 14845 / NCIMB 13405 / ORS 571).